The following is a 158-amino-acid chain: Endoribonuclease YbeY (158 aa).

The Zn(2+) site is built by His124, His128, and His134.

Belongs to the endoribonuclease YbeY family. The cofactor is Zn(2+).

It is found in the cytoplasm. Single strand-specific metallo-endoribonuclease involved in late-stage 70S ribosome quality control and in maturation of the 3' terminus of the 16S rRNA. The chain is Endoribonuclease YbeY from Latilactobacillus sakei subsp. sakei (strain 23K) (Lactobacillus sakei subsp. sakei).